The primary structure comprises 252 residues: MKAEIITVGDELLTGNTVDSNSAFIASKLTEKGYLVRRITTVGDDVEEIKSIILEALDRKPDVLVISGGLGPTHDDVTMLAVSKALNRELELCEECLERIRKFYVELHKKGLIDDPELNEARKKMAYLPKGATPLQNTEGAAPGAFIEHEGIKIFVLPGMPREMKAMLLNEVLPRLGERTFIQKKYLAEITDESKLAPILSEAIRKFNVRIHSSPKGFGKYIGIIIFGEDEEIIEKVIEFMQSRGISFKEGW.

Belongs to the CinA family.

In Pyrococcus abyssi (strain GE5 / Orsay), this protein is Protein PYRAB15930.